The chain runs to 398 residues: Tryptophan synthase beta chain (398 aa).

An N6-(pyridoxal phosphate)lysine modification is found at Lys88.

Belongs to the TrpB family. Tetramer of two alpha and two beta chains. The cofactor is pyridoxal 5'-phosphate.

It catalyses the reaction (1S,2R)-1-C-(indol-3-yl)glycerol 3-phosphate + L-serine = D-glyceraldehyde 3-phosphate + L-tryptophan + H2O. Its pathway is amino-acid biosynthesis; L-tryptophan biosynthesis; L-tryptophan from chorismate: step 5/5. Functionally, the beta subunit is responsible for the synthesis of L-tryptophan from indole and L-serine. This is Tryptophan synthase beta chain from Mannheimia succiniciproducens (strain KCTC 0769BP / MBEL55E).